The chain runs to 501 residues: Bifunctional purine biosynthesis protein PurH (501 aa).

Positions 1–144 (MKKRALISVF…KNFKDVVVLS (144 aa)) constitute an MGS-like domain.

This sequence belongs to the PurH family.

The enzyme catalyses (6R)-10-formyltetrahydrofolate + 5-amino-1-(5-phospho-beta-D-ribosyl)imidazole-4-carboxamide = 5-formamido-1-(5-phospho-D-ribosyl)imidazole-4-carboxamide + (6S)-5,6,7,8-tetrahydrofolate. It catalyses the reaction IMP + H2O = 5-formamido-1-(5-phospho-D-ribosyl)imidazole-4-carboxamide. Its pathway is purine metabolism; IMP biosynthesis via de novo pathway; 5-formamido-1-(5-phospho-D-ribosyl)imidazole-4-carboxamide from 5-amino-1-(5-phospho-D-ribosyl)imidazole-4-carboxamide (10-formyl THF route): step 1/1. The protein operates within purine metabolism; IMP biosynthesis via de novo pathway; IMP from 5-formamido-1-(5-phospho-D-ribosyl)imidazole-4-carboxamide: step 1/1. In Clostridium perfringens (strain 13 / Type A), this protein is Bifunctional purine biosynthesis protein PurH.